The following is a 564-amino-acid chain: uncharacterized protein (564 aa).

A run of 8 helical transmembrane segments spans residues 12–32, 97–119, 139–161, 188–208, 213–233, 277–297, 306–326, and 348–368; these read TYYLWIALFLLLLYVSPLFIL, MTAYAISQTVTRVVAFFGMYVLL, AFALTPFWPSGMLSTLGYPLALW, FVLGFFFFLAGMACFWLYDAI, WNLMFLGSIAFMTSIYLFVEY, MTVHTVVILPILMVVFAALLF, NVYLFLCVLNYGLSLWYAFWF, and FHFLRPLVIYVSFALALYLIW.

It is found in the cell membrane. This is an uncharacterized protein from Bacillus subtilis (strain 168).